The sequence spans 425 residues: Alpha-(1,3)-fucosyltransferase C (425 aa).

Over M1–R37 the chain is Cytoplasmic. A helical; Signal-anchor for type II membrane protein membrane pass occupies residues G38–T58. The Lumenal segment spans residues Q59–L425. Residues N187 and N230 are each glycosylated (N-linked (GlcNAc...) asparagine).

It belongs to the glycosyltransferase 10 family.

Its subcellular location is the golgi apparatus. It is found in the golgi stack membrane. Its pathway is protein modification; protein glycosylation. This Drosophila melanogaster (Fruit fly) protein is Alpha-(1,3)-fucosyltransferase C (FucTC).